A 482-amino-acid chain; its full sequence is ATP synthase subunit beta (482 aa).

168 to 175 (GGAGVGKT) lines the ATP pocket.

Belongs to the ATPase alpha/beta chains family. F-type ATPases have 2 components, CF(1) - the catalytic core - and CF(0) - the membrane proton channel. CF(1) has five subunits: alpha(3), beta(3), gamma(1), delta(1), epsilon(1). CF(0) has three main subunits: a(1), b(2) and c(9-12). The alpha and beta chains form an alternating ring which encloses part of the gamma chain. CF(1) is attached to CF(0) by a central stalk formed by the gamma and epsilon chains, while a peripheral stalk is formed by the delta and b chains.

It is found in the cell membrane. The catalysed reaction is ATP + H2O + 4 H(+)(in) = ADP + phosphate + 5 H(+)(out). Functionally, produces ATP from ADP in the presence of a proton gradient across the membrane. The catalytic sites are hosted primarily by the beta subunits. The polypeptide is ATP synthase subunit beta (Nocardia farcinica (strain IFM 10152)).